Here is a 691-residue protein sequence, read N- to C-terminus: Elongation factor G (691 aa).

Positions 8–282 (HMVRNIGIAA…AVVDYLPAPD (275 aa)) constitute a tr-type G domain. GTP contacts are provided by residues 17 to 24 (AHIDAGKT), 81 to 85 (DTPGH), and 135 to 138 (NKMD).

It belongs to the TRAFAC class translation factor GTPase superfamily. Classic translation factor GTPase family. EF-G/EF-2 subfamily.

It is found in the cytoplasm. Functionally, catalyzes the GTP-dependent ribosomal translocation step during translation elongation. During this step, the ribosome changes from the pre-translocational (PRE) to the post-translocational (POST) state as the newly formed A-site-bound peptidyl-tRNA and P-site-bound deacylated tRNA move to the P and E sites, respectively. Catalyzes the coordinated movement of the two tRNA molecules, the mRNA and conformational changes in the ribosome. This is Elongation factor G from Campylobacter hominis (strain ATCC BAA-381 / DSM 21671 / CCUG 45161 / LMG 19568 / NCTC 13146 / CH001A).